A 109-amino-acid chain; its full sequence is Aquaporin-2 (109 aa).

At 1 to 6 the chain is on the cytoplasmic side; it reads SVAFSR. The helical transmembrane segment at 7 to 27 threads the bilayer; it reads AVLAEFLATLIFVFFGLGSAL. Residues 28–35 lie on the Extracellular side of the membrane; sequence SWPQALPS. Residues 36–54 traverse the membrane as a helical segment; that stretch reads VLQIALAFGLAIGTLVQAL. Over 55-59 the chain is Cytoplasmic; sequence GHVSG. An intramembrane region (discontinuously helical) is located at residues 60–69; sequence AHINPAVTVA. Residues 63 to 65 carry the NPA 1 motif; that stretch reads NPA. At 70–80 the chain is on the cytoplasmic side; it reads CLVGCHVSFLR. The helical transmembrane segment at 81–102 threads the bilayer; it reads AAFYVAAQLLGAVAGAAILHEI. Residues 103–109 are Extracellular-facing; the sequence is TPPDVRG.

This sequence belongs to the MIP/aquaporin (TC 1.A.8) family. As to quaternary structure, homotetramer. Post-translationally, serine phosphorylation is necessary and sufficient for expression at the apical membrane. Endocytosis is not phosphorylation-dependent. N-glycosylated.

It is found in the apical cell membrane. Its subcellular location is the basolateral cell membrane. The protein localises to the cell membrane. The protein resides in the cytoplasmic vesicle membrane. It localises to the golgi apparatus. It is found in the trans-Golgi network membrane. It catalyses the reaction H2O(in) = H2O(out). The enzyme catalyses glycerol(in) = glycerol(out). Functionally, forms a water-specific channel that provides the plasma membranes of renal collecting duct with high permeability to water, thereby permitting water to move in the direction of an osmotic gradient. Plays an essential role in renal water homeostasis. Could also be permeable to glycerol. This Dasypus novemcinctus (Nine-banded armadillo) protein is Aquaporin-2.